The primary structure comprises 546 residues: Probable protein kinase UbiB (546 aa).

In terms of domain architecture, Protein kinase spans 124–502; sequence DFDIKPLASA…HVRQGQSRYL (379 aa). ATP-binding positions include 130 to 138 and lysine 153; that span reads LASASIAQV. The Proton acceptor role is filled by aspartate 288. 2 helical membrane-spanning segments follow: residues 501–521 and 522–542; these read YLLGIGATLVLSGTFLLVSRP and EWGLMPGWLMAAGLVAWFVGW.

This sequence belongs to the ABC1 family. UbiB subfamily.

The protein localises to the cell inner membrane. It functions in the pathway cofactor biosynthesis; ubiquinone biosynthesis [regulation]. Its function is as follows. Is probably a protein kinase regulator of UbiI activity which is involved in aerobic coenzyme Q (ubiquinone) biosynthesis. This is Probable protein kinase UbiB from Escherichia fergusonii (strain ATCC 35469 / DSM 13698 / CCUG 18766 / IAM 14443 / JCM 21226 / LMG 7866 / NBRC 102419 / NCTC 12128 / CDC 0568-73).